The primary structure comprises 171 residues: Adenine phosphoribosyltransferase (171 aa).

This sequence belongs to the purine/pyrimidine phosphoribosyltransferase family. In terms of assembly, homodimer.

It localises to the cytoplasm. The catalysed reaction is AMP + diphosphate = 5-phospho-alpha-D-ribose 1-diphosphate + adenine. It participates in purine metabolism; AMP biosynthesis via salvage pathway; AMP from adenine: step 1/1. In terms of biological role, catalyzes a salvage reaction resulting in the formation of AMP, that is energically less costly than de novo synthesis. This is Adenine phosphoribosyltransferase from Synechococcus sp. (strain ATCC 27144 / PCC 6301 / SAUG 1402/1) (Anacystis nidulans).